The primary structure comprises 388 residues: Formate-dependent phosphoribosylglycinamide formyltransferase (388 aa).

Residues 11 to 12 and E71 contribute to the N(1)-(5-phospho-beta-D-ribosyl)glycinamide site; that span reads EL. Residues R103, K144, 149–154, 184–187, and E192 each bind ATP; these read SSGKGQ and EEFI. The ATP-grasp domain maps to 108–300; it reads DLAAKELGLK…EFELHLRAVL (193 aa). 2 residues coordinate Mg(2+): E257 and E270. Residues D277, K349, and 356 to 357 contribute to the N(1)-(5-phospho-beta-D-ribosyl)glycinamide site; that span reads RR.

The protein belongs to the PurK/PurT family. In terms of assembly, homodimer.

It carries out the reaction N(1)-(5-phospho-beta-D-ribosyl)glycinamide + formate + ATP = N(2)-formyl-N(1)-(5-phospho-beta-D-ribosyl)glycinamide + ADP + phosphate + H(+). It participates in purine metabolism; IMP biosynthesis via de novo pathway; N(2)-formyl-N(1)-(5-phospho-D-ribosyl)glycinamide from N(1)-(5-phospho-D-ribosyl)glycinamide (formate route): step 1/1. In terms of biological role, involved in the de novo purine biosynthesis. Catalyzes the transfer of formate to 5-phospho-ribosyl-glycinamide (GAR), producing 5-phospho-ribosyl-N-formylglycinamide (FGAR). Formate is provided by PurU via hydrolysis of 10-formyl-tetrahydrofolate. The sequence is that of Formate-dependent phosphoribosylglycinamide formyltransferase from Bacteroides thetaiotaomicron (strain ATCC 29148 / DSM 2079 / JCM 5827 / CCUG 10774 / NCTC 10582 / VPI-5482 / E50).